A 555-amino-acid polypeptide reads, in one-letter code: MTTSSSGSVETSANSRPGTFSFASASFTDLLGGNAGAGGGGVSRYKAMTPPSLPLSPPPVSPSSFFNSPIGMNQADFLGSPVLLTSSIFPSPTTGAFASQHFDWRPEVAAAQSADQGGKDEQRNSYSDFSFQTAPASEEAARTTTFQPPVPPALLGDEAYRSQQQQQPWGYQQQPAGMDAGANAASFGAAPFQATSSEMAPQVQGGGGYSQPQSQRRSSDDGYNWRKYGQKQVKGSENPRSYYKCTFPNCPTKKKVERSLDGQITEIVYKGTHNHAKPQNTRRNSGSSAAQVLQSGGDMSEHSFGGMSGTAATPENSSASFGDDEIGVGSPRAGNGGGDEFDDDEPDSKRWRKDGDGEGISMAGNRTVREPRVVVQTMSDIDILDDGYRWRKYGQKVVKGNPNPRSYYKCTTAGCPVRKHVERASHDLRAVITTYEGKHNHDVPAARGSAALYRPAPPAAAATSSHPYLPNQPPPMSYQPTGPQPYALRPDGFGGQGPFGGVVGGSSFGGLSGFDDARGSYMSQHQQQQRQNDAMHASRAKEEPGDDMFFQNSLY.

2 disordered regions span residues 38 to 65 (GGGGVSRYKAMTPPSLPLSPPPVSPSSF) and 132 to 248 (QTAP…CTFP). Pro residues predominate over residues 51 to 61 (PSLPLSPPPVS). A compositionally biased stretch (low complexity) spans 163 to 194 (QQQQQPWGYQQQPAGMDAGANAASFGAAPFQA). The WRKY 1 DNA-binding region spans 214 to 278 (SQRRSSDDGY…YKGTHNHAKP (65 aa)). A Nuclear localization signal motif is present at residues 253–259 (KKKVERS). The interval 270–367 (KGTHNHAKPQ…EGISMAGNRT (98 aa)) is disordered. Composition is skewed to polar residues over residues 277 to 294 (KPQNTRRNSGSSAAQVLQ) and 310 to 320 (TAATPENSSAS). Over residues 347 to 356 (DSKRWRKDGD) the composition is skewed to basic and acidic residues. The WRKY 2 DNA-binding region spans 379–444 (SDIDILDDGY…YEGKHNHDVP (66 aa)). Residues 466–555 (HPYLPNQPPP…DDMFFQNSLY (90 aa)) form a transcription repression of gibberellic acid (GA)-induced promoters region. 2 disordered regions span residues 471–498 (NQPPPMSYQPTGPQPYALRPDGFGGQGP) and 513–555 (GFDD…NSLY).

Belongs to the WRKY group II-a family. Expressed in aleurone cells. Mostly expressed in aleurone layers and leaves, and, to a lower extent, in roots, panicles and embryos.

Its subcellular location is the nucleus. Transcription repressor. Interacts specifically with the W box (5'-(T)TGAC[CT]-3'), a frequently occurring elicitor-responsive cis-acting element. Negative regulator of both gibberellic acid (GA) and abscisic acid (ABA) signaling in aleurone cells, probably by interfering with GAM1, via the specific repression of GA- and ABA-induced promoters. The sequence is that of WRKY transcription factor WRKY24 from Oryza sativa subsp. indica (Rice).